Here is a 1356-residue protein sequence, read N- to C-terminus: RHO1 GDP-GTP exchange protein 2 (1356 aa).

S2 carries the N-acetylserine modification. Disordered regions lie at residues 74 to 94 and 109 to 175; these read RRSG…EMKG and EVPD…PRNE. The residue at position 76 (S76) is a Phosphoserine. 2 stretches are compositionally biased toward polar residues: residues 109–125 and 147–157; these read EVPD…TPVS and HIYSTSNSASR. The residue at position 193 (S193) is a Phosphoserine. Disordered stretches follow at residues 202–291, 303–362, 383–409, 531–571, and 626–645; these read LKKQ…RSMS, SFQS…SSSN, SVSG…VMSA, GNHS…SQQK, and NISM…TSSV. Over residues 204-221 the composition is skewed to polar residues; the sequence is KQSSFSTGSASTTPTQAR. S223 bears the Phosphoserine mark. The span at 235 to 244 shows a compositional bias: basic and acidic residues; the sequence is SSKDLHEQHQ. Residues 250-265 are compositionally biased toward low complexity; that stretch reads QHNNINNHNNNNTNNN. The span at 271-281 shows a compositional bias: polar residues; the sequence is VGSSNSNYPQH. Positions 282-291 are enriched in low complexity; the sequence is SHSISSRSMS. A compositionally biased stretch (polar residues) spans 303–325; sequence SFQSKTSNSRKATQKYDITSNPF. Positions 329–338 are enriched in basic residues; sequence HHHHHHHHSS. Low complexity-rich tracts occupy residues 339–362 and 383–401; these read NSHS…SSSN and SVSG…TPLS. S566 and S628 each carry phosphoserine. One can recognise a DH domain in the interval 659–846; it reads KRQEAIYEVY…RDFMKRIDQA (188 aa). The region spanning 1034-1336 is the CNH domain; it reads TNKINSVTSC…RLLQTSTQEI (303 aa).

Stimulates the exchange of RHO1 GDP-bound form into GTP-bound form. The sequence is that of RHO1 GDP-GTP exchange protein 2 (ROM2) from Saccharomyces cerevisiae (strain ATCC 204508 / S288c) (Baker's yeast).